A 525-amino-acid polypeptide reads, in one-letter code: ATP synthase subunit beta, mitochondrial (525 aa).

A mitochondrion-targeting transit peptide spans 1 to 44 (MLKKQALSGIRRFSLATKQSFVKTSYKLPRKSWLNTAKFNTIRY). ATP is bound at residue 203-210 (GGAGVGKT).

Belongs to the ATPase alpha/beta chains family. In terms of assembly, F-type ATPases have 2 components, CF(1) - the catalytic core - and CF(0) - the membrane proton channel. CF(1) has five subunits: alpha(3), beta(3), gamma(1), delta(1), epsilon(1). CF(0) has three main subunits: a, b and c.

The protein resides in the mitochondrion. It localises to the mitochondrion inner membrane. The enzyme catalyses ATP + H2O + 4 H(+)(in) = ADP + phosphate + 5 H(+)(out). Mitochondrial membrane ATP synthase (F(1)F(0) ATP synthase or Complex V) produces ATP from ADP in the presence of a proton gradient across the membrane which is generated by electron transport complexes of the respiratory chain. F-type ATPases consist of two structural domains, F(1) - containing the extramembraneous catalytic core, and F(0) - containing the membrane proton channel, linked together by a central stalk and a peripheral stalk. During catalysis, ATP synthesis in the catalytic domain of F(1) is coupled via a rotary mechanism of the central stalk subunits to proton translocation. Subunits alpha and beta form the catalytic core in F(1). Rotation of the central stalk against the surrounding alpha(3)beta(3) subunits leads to hydrolysis of ATP in three separate catalytic sites on the beta subunits. In Schizosaccharomyces pombe (strain 972 / ATCC 24843) (Fission yeast), this protein is ATP synthase subunit beta, mitochondrial (atp2).